The primary structure comprises 95 residues: UPF0235 protein Swoo_1329 (95 aa).

The protein belongs to the UPF0235 family.

This is UPF0235 protein Swoo_1329 from Shewanella woodyi (strain ATCC 51908 / MS32).